A 690-amino-acid polypeptide reads, in one-letter code: Glutamate--cysteine ligase (690 aa).

Composition is skewed to low complexity over residues Gln-574 to Asn-585 and Asn-598 to Thr-619. Residues Gln-574–Met-620 are disordered.

The protein belongs to the glutamate--cysteine ligase type 3 family.

The catalysed reaction is L-cysteine + L-glutamate + ATP = gamma-L-glutamyl-L-cysteine + ADP + phosphate + H(+). It functions in the pathway sulfur metabolism; glutathione biosynthesis; glutathione from L-cysteine and L-glutamate: step 1/2. In Candida albicans (Yeast), this protein is Glutamate--cysteine ligase (GCS1).